A 215-amino-acid polypeptide reads, in one-letter code: Cytochrome b6 (215 aa).

The chain crosses the membrane as a helical span at residues I32–F52. C35 contributes to the heme c binding site. Residues H86 and H100 each contribute to the heme b site. 3 helical membrane-spanning segments follow: residues A90–F110, L116–Y136, and L186–I206. Positions 187 and 202 each coordinate heme b.

It belongs to the cytochrome b family. PetB subfamily. As to quaternary structure, the 4 large subunits of the cytochrome b6-f complex are cytochrome b6, subunit IV (17 kDa polypeptide, PetD), cytochrome f and the Rieske protein, while the 4 small subunits are PetG, PetL, PetM and PetN. The complex functions as a dimer. It depends on heme b as a cofactor. Requires heme c as cofactor.

It is found in the plastid. The protein resides in the chloroplast thylakoid membrane. Its function is as follows. Component of the cytochrome b6-f complex, which mediates electron transfer between photosystem II (PSII) and photosystem I (PSI), cyclic electron flow around PSI, and state transitions. The sequence is that of Cytochrome b6 from Populus alba (White poplar).